We begin with the raw amino-acid sequence, 288 residues long: 33 kDa chaperonin (288 aa).

2 disulfide bridges follow: Cys235/Cys237 and Cys268/Cys271.

The protein belongs to the HSP33 family. Post-translationally, under oxidizing conditions two disulfide bonds are formed involving the reactive cysteines. Under reducing conditions zinc is bound to the reactive cysteines and the protein is inactive.

Its subcellular location is the cytoplasm. In terms of biological role, redox regulated molecular chaperone. Protects both thermally unfolding and oxidatively damaged proteins from irreversible aggregation. Plays an important role in the bacterial defense system toward oxidative stress. The polypeptide is 33 kDa chaperonin (Streptococcus thermophilus (strain ATCC BAA-491 / LMD-9)).